Here is a 507-residue protein sequence, read N- to C-terminus: Putative propionyl-CoA carboxylase beta chain (507 aa).

A compositionally biased stretch (basic and acidic residues) spans 1-25; it reads MNEHMDHFYTKRKQAEEGGGREKLA. Positions 1-30 are disordered; the sequence is MNEHMDHFYTKRKQAEEGGGREKLAQQRQK. The CoA carboxyltransferase N-terminal domain maps to 1–254; it reads MNEHMDHFYT…NGRTTEPKPE (254 aa). Residues 1–501 form a carboxyltransferase region; it reads MNEHMDHFYT…HKTEERPKKK (501 aa). A CoA carboxyltransferase C-terminal domain is found at 256 to 501; sequence EASRPLLNRL…HKTEERPKKK (246 aa).

It belongs to the AccD/PCCB family. As to quaternary structure, probably a dodecamer composed of six biotin-containing alpha subunits and six beta subunits.

The catalysed reaction is propanoyl-CoA + hydrogencarbonate + ATP = (S)-methylmalonyl-CoA + ADP + phosphate + H(+). It functions in the pathway metabolic intermediate metabolism; propanoyl-CoA degradation; succinyl-CoA from propanoyl-CoA: step 1/3. The polypeptide is Putative propionyl-CoA carboxylase beta chain (yqjD) (Bacillus subtilis (strain 168)).